The primary structure comprises 147 residues: Myosin regulatory light chain (147 aa).

Thr-1 carries the post-translational modification N-acetylthreonine. EF-hand domains follow at residues 2-37 (ASADQIQECFQIFDKDNDGKVSIEELGSALRSLGKN), 73-108 (EQSKEMLDAFRALDKEGNGTIQEAELRQLLLNLGDA), and 109-144 (LTSSEVEELMKEVSVSGDGAINYESFVDMLVTGYPL). Ca(2+)-binding residues include Asp-15, Asp-17, Asp-19, Lys-21, Glu-26, Asp-86, Asn-90, Thr-92, and Glu-97.

This Physarum polycephalum (Slime mold) protein is Myosin regulatory light chain.